We begin with the raw amino-acid sequence, 272 residues long: Small ribosomal subunit protein uS3 (272 aa).

Residues 43–111 (IRELMTTGME…QIQLNILEVK (69 aa)) enclose the KH type-2 domain. The disordered stretch occupies residues 218–272 (AKEAAQPSGRGRGGERRGGGERRRRNDRAERAPRQENAGAGAETPAAAPAEGGNA). A compositionally biased stretch (basic and acidic residues) spans 229–238 (RGGERRGGGE). Low complexity predominate over residues 253–272 (ENAGAGAETPAAAPAEGGNA).

Belongs to the universal ribosomal protein uS3 family. Part of the 30S ribosomal subunit. Forms a tight complex with proteins S10 and S14.

Functionally, binds the lower part of the 30S subunit head. Binds mRNA in the 70S ribosome, positioning it for translation. The protein is Small ribosomal subunit protein uS3 of Micrococcus luteus (strain ATCC 4698 / DSM 20030 / JCM 1464 / CCM 169 / CCUG 5858 / IAM 1056 / NBRC 3333 / NCIMB 9278 / NCTC 2665 / VKM Ac-2230) (Micrococcus lysodeikticus).